We begin with the raw amino-acid sequence, 96 residues long: Large ribosomal subunit protein uL23 (96 aa).

Belongs to the universal ribosomal protein uL23 family. Part of the 50S ribosomal subunit. Contacts protein L29, and trigger factor when it is bound to the ribosome.

Its function is as follows. One of the early assembly proteins it binds 23S rRNA. One of the proteins that surrounds the polypeptide exit tunnel on the outside of the ribosome. Forms the main docking site for trigger factor binding to the ribosome. The chain is Large ribosomal subunit protein uL23 from Endomicrobium trichonymphae.